The sequence spans 407 residues: Arrestin domain-containing protein 2 (407 aa).

This sequence belongs to the arrestin family. As to quaternary structure, interacts with WWP1 (via WW domains).

The sequence is that of Arrestin domain-containing protein 2 (Arrdc2) from Mus musculus (Mouse).